The chain runs to 463 residues: ATP synthase subunit beta (463 aa).

152–159 (GGAGVGKT) is a binding site for ATP.

The protein belongs to the ATPase alpha/beta chains family. As to quaternary structure, F-type ATPases have 2 components, CF(1) - the catalytic core - and CF(0) - the membrane proton channel. CF(1) has five subunits: alpha(3), beta(3), gamma(1), delta(1), epsilon(1). CF(0) has three main subunits: a(1), b(2) and c(9-12). The alpha and beta chains form an alternating ring which encloses part of the gamma chain. CF(1) is attached to CF(0) by a central stalk formed by the gamma and epsilon chains, while a peripheral stalk is formed by the delta and b chains.

It is found in the cell inner membrane. It catalyses the reaction ATP + H2O + 4 H(+)(in) = ADP + phosphate + 5 H(+)(out). Its function is as follows. Produces ATP from ADP in the presence of a proton gradient across the membrane. The catalytic sites are hosted primarily by the beta subunits. The polypeptide is ATP synthase subunit beta (Shewanella sp. (strain MR-7)).